A 2571-amino-acid chain; its full sequence is MSPIFLGDSEDAATCRCGPPSSPSPELSGTETALTSDSDGPELLNPGPQGPEPIAIIGMGCRLPGGASTPSKLWELLEAGRSAQGRLPADRYNMDAFYHPNGDRPGSMNTSGGYFIQEDVRGFDNSMFGINHLEAMYMDPQQRKLLEVTFEAFEAAGLSLDAVSGANVGCYVGNFVTDFITMQLKDAEYTHRYTATGSGTTILANRISHVFNLKGPSFVIDTACSSSLYSLHAACSALWQRECDAAVVAGANLIQSPEQQLATMKAGVLSGTSTCHTFDASADGYGRADGIGVLLVKRLSDAIRDNDPIRSVIRSTAVNSNGKTNGITLPSADGQEAVIRKAYALAGLGYGDTDYVECHGTGTAVGDPIEVEALSRVFRRQPGSQPLLIGSVKTNLGHSEAASGISSLLKVAMALECGRIPPTIGISSLNPKLKLDEWNMRIVTENTEWPQNRTPNGQQGGRALRRAGVNSFGYGGANAHCILESPDSHVPRGYRERGAATRLTNTTTGAPRTALLLPVSSKSASSLEQKSADIASYVAAKTASSADLQASELAYTLGVRRSHLSSRGFWIAAPDSLSEDVVVGSDAASSKLHTRIPGRAYGRHPLAFVFTGQGAQWAGMGRELMDEFPSFRRTVQMLDSTLQLLPHPPTWTLRGALLEPPESSSINLASRSQPVCTAVQLALVRLLRDWGVAPGFAVGHSSGEIAAAYAAGRLTARQAIAVAYYRGYAVERSTTVGAMMAAGLSQDEADGDIAALGLAGKIRVACVNSPESVTISGDTDGIDEYKAVLDGRGVFARLLKTDGRAYHSHHMAAIGGLYEDLVVEALASPAVQNDLDDAGQQNSSPAQWISSVTGQVVGDDMPTAEPSYWRANLESPVLFAQVVEKLLSPGTPVHLVEIGPHSALEMPIKQTRTKVGIDAAKTPYNSALLRGKNSTTTMLTLAGELFLHGHPIAFGAVNNTTTAHTHSRYPPTKPGMLLSARQPQVLTDLPRHVWEYDGGAGFHEPRSSIEWRNRTHARHDLLGSRVPGGDGITRQWRNVLRAADLAWLVGHKLDTTTVLPAAGYLAMAVEAACQSTGLSLERYGRGSPRCSFALRHVHVEKALMVPDDQQSGIEVFTTLQPTTAPRTATAGSGGWYKFIVSSFVAGESTRHAHGLVKLTQNEDRPPARRLPVEDEAMEQSAPRTWYRRFVQEGLNFSGPLQSLSRIETHRRRGEMHLLAQTSLSPGLGGESAYALHPIAIDALFQSGPIACTRGVVRDFTAKVPVYIKDMELRMPSRSLLSGSFVSPSGDESAEATAQQGSIRTICKSAGLGAISVDSQLFDGDDLVLCVSGCRMVPYSSGTAVGAAAGDGYERHPMLHVAWKPDVERLADAGIEHGASALTAYLSQFQGTTVIGDDADGVAGVLGAAKLAGGVLDLVVHKRPTLHVLLASDSTQDDGAAKHMRELLGVGTAFQRCLSLWKRSTDEDGAVHFQDLSAKEDTTANGTATAASSAPPSIFDVLVILDLDTSTKGSTSADLASYSSLVDEKKGTLIWSGPPSSASTASSGSIPAKLSPLGFSCMEAQQSHGTPVLEVVLAQRGLPDKKQELGQQEVLIVERNPDHKLNSELALHVAELTNKPAKRVTLDQLTPDLATAHATVIATVELEDALLADVKDGDFAQIKTLTDHCTNLIWVTGGGLADGTRPEQAVVFGLSRALMMEQPSLRFFVVGVDGECVAAETTARQVLGVARQALLDDAEPDFEFVQDGRAGGALQVSRFVPDDAMNSTFRQRQPNATETLEMRLGDAHPCRLSLAGPVAANMSDAFVFTRDLTHKNNDHGIGQDEVEVQVLTVGLHARDLRAMTGETSDGDGDTQPHAVTSQYVGRVVRVGSAVEGLGVDDSVLVMAPGRCATVERIPASSCSVLRDGEDPAAMASIPLPACTALYALRDRARLQPGETVLVCYREADAHGRDRSGPAAVHIARALGANVFAVVVVDDGDDEAKQEQRSEIVGDLGLPETHVSFVKVGDGAGFGSDMLSSHGRVQVVANFCTDRWPLSNVAALCADDARIVHVGRGTVLGELVTTDPTILRKNIALSTFDVNLLLTPVPSSPSTTRSGLLLDDVLSLWRQGKLNGLLGTQPRLFDVANLAEAFRALSGSTTKAGHTTPRGAVSVSFEATSLVRVAPPNYHTVFNPDKSYLLVGCLGGLGRSMSRWMLSRGARKFTFLGRSGTDREPAARLVQYLELCGASVTVVRGDVVDASDVERAVAASAAAGPIGGVVQAAMGLDEALFTAMPAAYWRKGLAPKVRGSLNLHAALAGRDADLDFFLMTSSVSGSVGTATESNYCAANYFLDVFARHRRGLGLPATSVGLGMISEVGYLHENPEIEAMLLRKGIQAISEDEMLNMIDISLSASSSSRTRGSPAAAWRGTDHALAHTLTGLEPIGVRELRAQGFDVSSPVLGDPRASLLAAALAADENESAGAGAGGASTSSGGLPAGLAQAVAGGSAGAVAAQALELVADKFSNLVLVPRDRLDLLRPLSDVGVDSMLAAEFRGWIYQQLKVNVPYLTMLASTTTLTMLSELIAGKLLEA.

Residues 1–51 form a disordered region; it reads MSPIFLGDSEDAATCRCGPPSSPSPELSGTETALTSDSDGPELLNPGPQGP. The segment covering 27–38 has biased composition (polar residues); the sequence is LSGTETALTSDS. A Ketosynthase family 3 (KS3) domain is found at 51–485; the sequence is PEPIAIIGMG…GANAHCILES (435 aa). Residues Cys224, His359, and His398 each act as for beta-ketoacyl synthase activity in the active site. Residues 609 to 932 form a malonyl-CoA:ACP transacylase (MAT) domain region; that stretch reads VFTGQGAQWA…PYNSALLRGK (324 aa). Ser701 acts as the For malonyltransferase activity in catalysis. The segment at 1019 to 1163 is N-terminal hotdog fold; sequence HDLLGSRVPG…GLVKLTQNED (145 aa). A dehydratase (DH) domain region spans residues 1019–1340; the sequence is HDLLGSRVPG…SGCRMVPYSS (322 aa). A PKS/mFAS DH domain is found at 1019–1344; sequence HDLLGSRVPG…MVPYSSGTAV (326 aa). His1051 functions as the Proton acceptor; for dehydratase activity in the catalytic mechanism. A C-terminal hotdog fold region spans residues 1177 to 1344; it reads MEQSAPRTWY…MVPYSSGTAV (168 aa). The active-site Proton donor; for dehydratase activity is Asp1241. Positions 1800–2140 are enoyl reductase (ER) domain; it reads NMSDAFVFTR…AFRALSGSTT (341 aa). The tract at residues 2177 to 2355 is ketoreductase (KR) domain; the sequence is SYLLVGCLGG…ATSVGLGMIS (179 aa). The 79-residue stretch at 2490-2568 folds into the Carrier domain; sequence AVAAQALELV…MLSELIAGKL (79 aa). Position 2527 is an O-(pantetheine 4'-phosphoryl)serine (Ser2527).

Its pathway is polyketide biosynthesis. Its function is as follows. Highly reducing polyketide synthase; part of the gene cluster that mediates the biosynthesis of pyriculol and pyriculariol, two heptaketides that induce lesion formation upon application on rice leaves but are dispensable for pathogenicity. The highly reducing polyketide synthase synthesizes the heptaketide backbone of pyriculol and pyriculariol. Pyriculol and pyriculariol contain several hydroxyl moieties and double bonds, so it can be assumed that several reduction steps occur during biosynthesis. These reactions could be executed by PKS19 itself or partly by the tailoring enzymes OXR1, PXR2, RED1, RED2 or RED3, identified within the cluster. The FAD-linked oxidoreductase OXR1 is the only tailoring enzyme for which the function has been determined yet, and is involved in the oxidation of dihydropyriculol and dihydropyriculariol into pyriculol and pyriculariol, respectively. The sequence is that of Highly reducing polyketide synthase 19 from Pyricularia oryzae (strain 70-15 / ATCC MYA-4617 / FGSC 8958) (Rice blast fungus).